Reading from the N-terminus, the 75-residue chain is Protease B inhibitor 2 (75 aa).

Thr-74 carries the phosphothreonine modification.

Belongs to the protease inhibitor I9 family. As to quaternary structure, part of the heterodimeric LMA1 complex together with the thioredoxin II/TRX2. LMA1 binds to the ATPase SEC18.

It is found in the cytoplasm. Functionally, cytosolic inhibitor of vacuolar proteinase B (yscB), probably regulating protease B activity during limited proteolysis. PBI2 is a component of the LMA1 complex, which is involved in the facilitation of vesicle fusion such as homotypic vacuole and ER-derived COPII vesicle fusion with the Golgi. The sequence is that of Protease B inhibitor 2 (PBI2) from Saccharomyces cerevisiae (strain ATCC 204508 / S288c) (Baker's yeast).